The following is a 317-amino-acid chain: Transaldolase (317 aa).

Lysine 132 serves as the catalytic Schiff-base intermediate with substrate.

The protein belongs to the transaldolase family. Type 1 subfamily. As to quaternary structure, homodimer.

The protein resides in the cytoplasm. The catalysed reaction is D-sedoheptulose 7-phosphate + D-glyceraldehyde 3-phosphate = D-erythrose 4-phosphate + beta-D-fructose 6-phosphate. The protein operates within carbohydrate degradation; pentose phosphate pathway; D-glyceraldehyde 3-phosphate and beta-D-fructose 6-phosphate from D-ribose 5-phosphate and D-xylulose 5-phosphate (non-oxidative stage): step 2/3. In terms of biological role, transaldolase is important for the balance of metabolites in the pentose-phosphate pathway. This is Transaldolase from Histophilus somni (strain 2336) (Haemophilus somnus).